A 282-amino-acid polypeptide reads, in one-letter code: Undecaprenyl-diphosphatase (282 aa).

The next 7 helical transmembrane spans lie at 1-21 (MTLF…FLPV), 40-60 (GAAF…IYFY), 85-105 (AAMG…GLLF), 117-137 (YWVS…EWSV), 196-216 (FSFL…LYHT), 229-249 (AITA…AFLI), and 258-278 (SIFI…IAAG).

Belongs to the UppP family.

It localises to the cell inner membrane. It carries out the reaction di-trans,octa-cis-undecaprenyl diphosphate + H2O = di-trans,octa-cis-undecaprenyl phosphate + phosphate + H(+). Its function is as follows. Catalyzes the dephosphorylation of undecaprenyl diphosphate (UPP). Confers resistance to bacitracin. This chain is Undecaprenyl-diphosphatase, found in Chlorobium phaeobacteroides (strain DSM 266 / SMG 266 / 2430).